The following is a 326-amino-acid chain: Amino acid--[acyl-carrier-protein] ligase 1 (326 aa).

Cysteine 131 lines the Zn(2+) pocket. ATP-binding positions include arginine 159, glutamate 161, and 168–169; that span reads RL. Residue glutamate 176 coordinates Zn(2+). An an L-alpha-amino acid-binding site is contributed by glutamate 176. ATP contacts are provided by residues lysine 235 and 250–253; that span reads ACMS. A Zn(2+)-binding site is contributed by cysteine 279. Residue arginine 286 coordinates ATP.

Belongs to the class-II aminoacyl-tRNA synthetase family. Amino acid--[acyl-carrier-protein] ligase subfamily. In terms of assembly, homodimer. The cofactor is Zn(2+).

It carries out the reaction an L-alpha-amino acid + holo-[ACP] + ATP = an L-alpha-aminoacyl-[ACP] + AMP + diphosphate. Catalyzes the ATP-dependent activation of L-glycine and its transfer to the phosphopantetheine prosthetic group covalently attached to the vicinal carrier protein bsr0959 of yet unknown function. May participate in nonribosomal peptide synthesis or related processes. L-alanine is a poor substrate whereas L-serine or D-amino acids are not substrates for ATP-dependent activation. Does not display tRNA aminoacylation activity. This is Amino acid--[acyl-carrier-protein] ligase 1 from Bradyrhizobium diazoefficiens (strain JCM 10833 / BCRC 13528 / IAM 13628 / NBRC 14792 / USDA 110).